Here is a 508-residue protein sequence, read N- to C-terminus: ATP synthase subunit alpha, mitochondrial (508 aa).

171–178 is an ATP binding site; the sequence is GDRQTGKT.

Belongs to the ATPase alpha/beta chains family. As to quaternary structure, F-type ATPases have 2 components, CF(1) - the catalytic core - and CF(0) - the membrane proton channel. CF(1) has five subunits: alpha(3), beta(3), gamma(1), delta(1), epsilon(1). CF(0) has three main subunits: a, b and c.

It localises to the mitochondrion. Its subcellular location is the mitochondrion inner membrane. Its function is as follows. Mitochondrial membrane ATP synthase (F(1)F(0) ATP synthase or Complex V) produces ATP from ADP in the presence of a proton gradient across the membrane which is generated by electron transport complexes of the respiratory chain. F-type ATPases consist of two structural domains, F(1) - containing the extramembraneous catalytic core, and F(0) - containing the membrane proton channel, linked together by a central stalk and a peripheral stalk. During catalysis, ATP synthesis in the catalytic domain of F(1) is coupled via a rotary mechanism of the central stalk subunits to proton translocation. Subunits alpha and beta form the catalytic core in F(1). Rotation of the central stalk against the surrounding alpha(3)beta(3) subunits leads to hydrolysis of ATP in three separate catalytic sites on the beta subunits. Subunit alpha does not bear the catalytic high-affinity ATP-binding sites. The chain is ATP synthase subunit alpha, mitochondrial (ATPA) from Phaseolus vulgaris (Kidney bean).